Reading from the N-terminus, the 449-residue chain is Xylose isomerase (449 aa).

Catalysis depends on residues His-103 and Asp-106. Mg(2+)-binding residues include Glu-234, Glu-270, His-273, Asp-298, Asp-309, Asp-311, and Asp-342.

It belongs to the xylose isomerase family. In terms of assembly, homotetramer. Mg(2+) serves as cofactor.

Its subcellular location is the cytoplasm. The enzyme catalyses alpha-D-xylose = alpha-D-xylulofuranose. This is Xylose isomerase from Levilactobacillus brevis (Lactobacillus brevis).